Reading from the N-terminus, the 214-residue chain is Phosphatidylserine decarboxylase proenzyme (214 aa).

The active-site Schiff-base intermediate with substrate; via pyruvic acid is the Ser182. Ser182 carries the pyruvic acid (Ser); by autocatalysis modification.

This sequence belongs to the phosphatidylserine decarboxylase family. PSD-A subfamily. Heterodimer of a large membrane-associated beta subunit and a small pyruvoyl-containing alpha subunit. It depends on pyruvate as a cofactor. Post-translationally, is synthesized initially as an inactive proenzyme. Formation of the active enzyme involves a self-maturation process in which the active site pyruvoyl group is generated from an internal serine residue via an autocatalytic post-translational modification. Two non-identical subunits are generated from the proenzyme in this reaction, and the pyruvate is formed at the N-terminus of the alpha chain, which is derived from the carboxyl end of the proenzyme. The post-translation cleavage follows an unusual pathway, termed non-hydrolytic serinolysis, in which the side chain hydroxyl group of the serine supplies its oxygen atom to form the C-terminus of the beta chain, while the remainder of the serine residue undergoes an oxidative deamination to produce ammonia and the pyruvoyl prosthetic group on the alpha chain.

It localises to the cell membrane. The enzyme catalyses a 1,2-diacyl-sn-glycero-3-phospho-L-serine + H(+) = a 1,2-diacyl-sn-glycero-3-phosphoethanolamine + CO2. The protein operates within phospholipid metabolism; phosphatidylethanolamine biosynthesis; phosphatidylethanolamine from CDP-diacylglycerol: step 2/2. In terms of biological role, catalyzes the formation of phosphatidylethanolamine (PtdEtn) from phosphatidylserine (PtdSer). In Burkholderia ambifaria (strain MC40-6), this protein is Phosphatidylserine decarboxylase proenzyme.